The primary structure comprises 177 residues: MSRVAKAPVVIPAGVDVKLNGQVITIKGKNGELTRTLNDAVEVKHADNALTFGPRDGYADGWAQAGTARALLNSMVIGVTEGFTKKLQLVGVGYRAAIKGNVVNLSLGFSHPVDHQLPAGITAECPSQTEIVLKGADKQLIGQVAADLRAYRRPEPYKGKGVRYADEVVRTKEAKKK.

This sequence belongs to the universal ribosomal protein uL6 family. In terms of assembly, part of the 50S ribosomal subunit.

In terms of biological role, this protein binds to the 23S rRNA, and is important in its secondary structure. It is located near the subunit interface in the base of the L7/L12 stalk, and near the tRNA binding site of the peptidyltransferase center. The polypeptide is Large ribosomal subunit protein uL6 (Cronobacter sakazakii (strain ATCC BAA-894) (Enterobacter sakazakii)).